The primary structure comprises 513 residues: Putative ribose/galactose/methyl galactoside import ATP-binding protein 2 (513 aa).

ABC transporter domains lie at 24–260 and 270–510; these read LTAE…VGRE and VPIG…VMEL. 56–63 lines the ATP pocket; that stretch reads GENGAGKS.

It belongs to the ABC transporter superfamily. Carbohydrate importer 2 (CUT2) (TC 3.A.1.2) family.

It localises to the cell inner membrane. It carries out the reaction D-ribose(out) + ATP + H2O = D-ribose(in) + ADP + phosphate + H(+). The enzyme catalyses D-galactose(out) + ATP + H2O = D-galactose(in) + ADP + phosphate + H(+). Its function is as follows. Part of an ABC transporter complex involved in carbohydrate import. Could be involved in ribose, galactose and/or methyl galactoside import. Responsible for energy coupling to the transport system. This is Putative ribose/galactose/methyl galactoside import ATP-binding protein 2 from Rhizobium meliloti (strain 1021) (Ensifer meliloti).